Consider the following 256-residue polypeptide: Type III pantothenate kinase (256 aa).

ATP is bound at residue 6–13 (DAGNSRIK). Residues Y90 and 97–100 (GSDR) each bind substrate. D99 (proton acceptor) is an active-site residue. Residue T123 participates in ATP binding. Substrate is bound at residue T187.

This sequence belongs to the type III pantothenate kinase family. Homodimer. NH4(+) is required as a cofactor. Requires K(+) as cofactor.

The protein localises to the cytoplasm. It catalyses the reaction (R)-pantothenate + ATP = (R)-4'-phosphopantothenate + ADP + H(+). It functions in the pathway cofactor biosynthesis; coenzyme A biosynthesis; CoA from (R)-pantothenate: step 1/5. In terms of biological role, catalyzes the phosphorylation of pantothenate (Pan), the first step in CoA biosynthesis. The protein is Type III pantothenate kinase of Burkholderia mallei (strain ATCC 23344).